A 198-amino-acid chain; its full sequence is Nucleoplasmin (198 aa).

Positions 35-38 are acidic tract A1; sequence SDED. Residues 125–145 show a composition bias toward acidic residues; that stretch reads SWAEEEGEEEVEEEEEEEDPE. Residues 125-198 are disordered; sequence SWAEEEGEEE…GRGRKPAAKK (74 aa). The interval 128–145 is acidic tract A2; it reads EEEGEEEVEEEEEEEDPE. A compositionally biased stretch (basic residues) spans 150–167; that stretch reads AVKRPAASKKGSQAKKKK. The Bipartite nuclear localization signal motif lies at 152 to 167; sequence KRPAASKKGSQAKKKK. Positions 172–174 are acidic tract A3; that stretch reads EEE. Over residues 183-198 the composition is skewed to basic residues; sequence KKGKGAGRGRKPAAKK.

This sequence belongs to the nucleoplasmin family. Homopentamer. Expressed in oocytes.

It is found in the nucleus. Functionally, acts as a chaperone for histones, such as histone H2A-H2B, and thus regulates the assembly of nucleosome cores. Involved in chromatin remodeling, especially during fertilization and early embryonic development. May be involved in sperm chromatin decondensation during fertilization. This Rhinella marina (Cane toad) protein is Nucleoplasmin.